The sequence spans 352 residues: UDP-N-acetylglucosamine--N-acetylmuramyl-(pentapeptide) pyrophosphoryl-undecaprenol N-acetylglucosamine transferase (352 aa).

Residues 13-15, Asn125, Arg161, Ser189, Ile242, 261-266, and Gln286 contribute to the UDP-N-acetyl-alpha-D-glucosamine site; these read TGG and ALTVSE.

The protein belongs to the glycosyltransferase 28 family. MurG subfamily.

It is found in the cell inner membrane. The catalysed reaction is di-trans,octa-cis-undecaprenyl diphospho-N-acetyl-alpha-D-muramoyl-L-alanyl-D-glutamyl-meso-2,6-diaminopimeloyl-D-alanyl-D-alanine + UDP-N-acetyl-alpha-D-glucosamine = di-trans,octa-cis-undecaprenyl diphospho-[N-acetyl-alpha-D-glucosaminyl-(1-&gt;4)]-N-acetyl-alpha-D-muramoyl-L-alanyl-D-glutamyl-meso-2,6-diaminopimeloyl-D-alanyl-D-alanine + UDP + H(+). Its pathway is cell wall biogenesis; peptidoglycan biosynthesis. Its function is as follows. Cell wall formation. Catalyzes the transfer of a GlcNAc subunit on undecaprenyl-pyrophosphoryl-MurNAc-pentapeptide (lipid intermediate I) to form undecaprenyl-pyrophosphoryl-MurNAc-(pentapeptide)GlcNAc (lipid intermediate II). The polypeptide is UDP-N-acetylglucosamine--N-acetylmuramyl-(pentapeptide) pyrophosphoryl-undecaprenol N-acetylglucosamine transferase (Erwinia tasmaniensis (strain DSM 17950 / CFBP 7177 / CIP 109463 / NCPPB 4357 / Et1/99)).